Consider the following 477-residue polypeptide: Proline--tRNA ligase (477 aa).

3 residues coordinate L-proline: T111, E113, and R142. 4 residues coordinate ATP: R142, T153, Q225, and T228. H230 lines the L-proline pocket. Residues S262 and R264 each contribute to the ATP site. The tract at residues E340–K369 is interaction with tRNA. Residues C427, C432, C458, and C461 each contribute to the Zn(2+) site.

The protein belongs to the class-II aminoacyl-tRNA synthetase family. ProS type 3 subfamily. In terms of assembly, homodimer. Only one tRNA molecule binds per dimer.

Its subcellular location is the cytoplasm. It catalyses the reaction tRNA(Pro) + L-proline + ATP = L-prolyl-tRNA(Pro) + AMP + diphosphate. Functionally, catalyzes the attachment of proline to tRNA(Pro) in a two-step reaction: proline is first activated by ATP to form Pro-AMP and then transferred to the acceptor end of tRNA(Pro). Can inadvertently accommodate and process cysteine. The sequence is that of Proline--tRNA ligase (proS) from Thermus thermophilus (strain ATCC 27634 / DSM 579 / HB8).